A 269-amino-acid chain; its full sequence is 2-dehydro-3-deoxyphosphooctonate aldolase (269 aa).

This sequence belongs to the KdsA family.

Its subcellular location is the cytoplasm. The enzyme catalyses D-arabinose 5-phosphate + phosphoenolpyruvate + H2O = 3-deoxy-alpha-D-manno-2-octulosonate-8-phosphate + phosphate. It participates in carbohydrate biosynthesis; 3-deoxy-D-manno-octulosonate biosynthesis; 3-deoxy-D-manno-octulosonate from D-ribulose 5-phosphate: step 2/3. It functions in the pathway bacterial outer membrane biogenesis; lipopolysaccharide biosynthesis. The protein is 2-dehydro-3-deoxyphosphooctonate aldolase (kdsA) of Chlamydia pneumoniae (Chlamydophila pneumoniae).